Reading from the N-terminus, the 185-residue chain is Elongation factor P (185 aa).

It belongs to the elongation factor P family.

It is found in the cytoplasm. It participates in protein biosynthesis; polypeptide chain elongation. Functionally, involved in peptide bond synthesis. Stimulates efficient translation and peptide-bond synthesis on native or reconstituted 70S ribosomes in vitro. Probably functions indirectly by altering the affinity of the ribosome for aminoacyl-tRNA, thus increasing their reactivity as acceptors for peptidyl transferase. The polypeptide is Elongation factor P (Streptococcus pyogenes serotype M49 (strain NZ131)).